The following is a 652-amino-acid chain: DNA ligase (652 aa).

Residues 29–33 (DSQYD), 78–79 (SL), and glutamate 107 each bind NAD(+). Lysine 109 serves as the catalytic N6-AMP-lysine intermediate. Residues arginine 130, glutamate 164, lysine 278, and lysine 302 each contribute to the NAD(+) site. Zn(2+)-binding residues include cysteine 395, cysteine 398, cysteine 413, and cysteine 418. The BRCT domain occupies 577–652 (STDAQLSGLT…IQDEDWLLNL (76 aa)).

Belongs to the NAD-dependent DNA ligase family. LigA subfamily. Mg(2+) serves as cofactor. It depends on Mn(2+) as a cofactor.

The catalysed reaction is NAD(+) + (deoxyribonucleotide)n-3'-hydroxyl + 5'-phospho-(deoxyribonucleotide)m = (deoxyribonucleotide)n+m + AMP + beta-nicotinamide D-nucleotide.. DNA ligase that catalyzes the formation of phosphodiester linkages between 5'-phosphoryl and 3'-hydroxyl groups in double-stranded DNA using NAD as a coenzyme and as the energy source for the reaction. It is essential for DNA replication and repair of damaged DNA. The polypeptide is DNA ligase (Streptococcus agalactiae serotype III (strain NEM316)).